We begin with the raw amino-acid sequence, 210 residues long: Thymidylate kinase (210 aa).

9–16 is a binding site for ATP; sequence GLEGAGKS.

The protein belongs to the thymidylate kinase family.

The enzyme catalyses dTMP + ATP = dTDP + ADP. Functionally, phosphorylation of dTMP to form dTDP in both de novo and salvage pathways of dTTP synthesis. This is Thymidylate kinase from Aliivibrio salmonicida (strain LFI1238) (Vibrio salmonicida (strain LFI1238)).